Consider the following 432-residue polypeptide: Trigger factor (432 aa).

A PPIase FKBP-type domain is found at 161 to 246; that stretch reads EDRVTIDFSG…LKKVEERELP (86 aa).

This sequence belongs to the FKBP-type PPIase family. Tig subfamily.

It localises to the cytoplasm. The catalysed reaction is [protein]-peptidylproline (omega=180) = [protein]-peptidylproline (omega=0). Functionally, involved in protein export. Acts as a chaperone by maintaining the newly synthesized protein in an open conformation. Functions as a peptidyl-prolyl cis-trans isomerase. The sequence is that of Trigger factor from Enterobacter sp. (strain 638).